A 1092-amino-acid chain; its full sequence is Extended synaptotagmin-1 (1092 aa).

Methionine 1 bears the N-acetylmethionine mark. Residues 1–28 are Cytoplasmic-facing; it reads MEHSPEEGASPEPSGQPPATDSTRDGGS. The tract at residues 1-36 is disordered; sequence MEHSPEEGASPEPSGQPPATDSTRDGGSGVPPAGPG. Residues 29–49 form a helical membrane-spanning segment; that stretch reads GVPPAGPGAASEALAVLTSFG. Residues 50–52 are Lumenal-facing; it reads RRL. The helical transmembrane segment at 53-73 threads the bilayer; sequence LVLVPVYLAGAAGLSVGFVLF. The Cytoplasmic portion of the chain corresponds to 74–1092; that stretch reads GLALYLGWRR…LMDDRDKGGS (1019 aa). Residues 125-303 enclose the SMP-LTD domain; it reads DVEKAEWLNK…LPNRLLVPLV (179 aa). C2 domains follow at residues 302-423, 444-570, 616-738, and 769-886; these read LVPD…DNWY, DAEK…QLSS, DAPP…DEWL, and QVNS…ALSG. Serine 314 bears the Phosphoserine; by CDK5 mark. Residues lysine 334, aspartate 335, aspartate 347, aspartate 394, aspartate 396, aspartate 398, aspartate 400, and aspartate 401 each coordinate Ca(2+). The segment at 604-628 is disordered; that stretch reads WDRESLETGSSVDAPPRPYHTTPNS. Lysine 804 is subject to N6-acetyllysine. Serine 807 is subject to Phosphoserine. The interval 909–937 is disordered; the sequence is HSHSYSHSHSSSSLNDEPEALGGPTHPAS. The span at 911–921 shows a compositional bias: low complexity; sequence HSYSHSHSSSS. Serine 937 and serine 951 each carry phosphoserine. Residues 959–1081 enclose the C2 5 domain; sequence PLGQVKLTVW…DLSQGAAQWY (123 aa). Residue tyrosine 997 is modified to Phosphotyrosine. The segment at 1006–1013 is required for phosphatidylinositol 4,5-bisphosphate-dependent location at the cell membrane; the sequence is KNRSTKRK.

It belongs to the extended synaptotagmin family. Interacts with ESYT2 and ESYT3. Interacts with ADGRD1; inhibiting the G-protein-coupled receptor activity of ADGRD1. Interaction with ADGRD1 is abolished when cytosolic calcium increases, relieving ADGRD1 G-protein-coupled receptor activity. Interacts (phosphorylated form) with SLC2A4. Phosphorylated on Ser residues in insulin-treated adipocytes (in vitro); this promotes interaction with SLC2A4.

The protein resides in the endoplasmic reticulum membrane. Its subcellular location is the cell membrane. Binds calcium (via the C2 domains) and translocates to sites of contact between the endoplasmic reticulum and the cell membrane in response to increased cytosolic calcium levels. Helps tether the endoplasmic reticulum to the cell membrane and promotes the formation of appositions between the endoplasmic reticulum and the cell membrane. Acts as an inhibitor of ADGRD1 G-protein-coupled receptor activity in absence of cytosolic calcium. Binds glycerophospholipids in a barrel-like domain and may play a role in cellular lipid transport. The sequence is that of Extended synaptotagmin-1 (Esyt1) from Mus musculus (Mouse).